Consider the following 187-residue polypeptide: UPF0232 protein JTY_0004 (187 aa).

Composition is skewed to basic and acidic residues over residues 1–17 (MTGS…ERSM) and 24–45 (LVRR…DAGR). Disordered stretches follow at residues 1-75 (MTGS…DPQP) and 168-187 (PSWR…DTYG).

Belongs to the UPF0232 family.

This Mycobacterium bovis (strain BCG / Tokyo 172 / ATCC 35737 / TMC 1019) protein is UPF0232 protein JTY_0004.